The following is a 446-amino-acid chain: Butyryl-CoA:acetate CoA-transferase (446 aa).

Residue 220-224 (GIGGM) coordinates CoA. Glutamate 245 (5-glutamyl coenzyme A thioester intermediate) is an active-site residue. CoA is bound by residues valine 320, glycine 343, and lysine 370.

The protein belongs to the acetyl-CoA hydrolase/transferase family. Butyryl-CoA CoA-transferase subfamily.

It catalyses the reaction butanoate + acetyl-CoA = butanoyl-CoA + acetate. It carries out the reaction propanoate + acetyl-CoA = propanoyl-CoA + acetate. Its pathway is lipid metabolism; butanoate metabolism. Its function is as follows. Coenzyme A-transferase that converts butyryl-CoA to butyrate. Can also use proprionyl-CoA as substrate in vitro. This chain is Butyryl-CoA:acetate CoA-transferase, found in Anaerostipes caccae (strain DSM 14662 / CCUG 47493 / JCM 13470 / NCIMB 13811 / L1-92).